Reading from the N-terminus, the 523-residue chain is Polypyrimidine tract-binding protein 3 (523 aa).

Residues 1–25 (MNSSTSAGVYANGNDNKKFKGDRPP) are disordered. RRM domains are found at residues 30–114 (RVLH…NLPN), 153–229 (LRII…FSKL), and 329–403 (SVLL…LSKH). Lysine 36 participates in a covalent cross-link: Glycyl lysine isopeptide (Lys-Gly) (interchain with G-Cter in SUMO2). Position 98 is a phosphotyrosine (tyrosine 98). Residue threonine 109 is modified to Phosphothreonine. Lysine 187 is covalently cross-linked (Glycyl lysine isopeptide (Lys-Gly) (interchain with G-Cter in SUMO2)). Lysine 394 carries the post-translational modification N6-acetyllysine. The tract at residues 406–426 (VQLPREGQEDQGLTKDFSNSP) is disordered. A Phosphoserine modification is found at serine 425. The region spanning 446–521 (ATLHLSNIPP…HHLRVSFSKS (76 aa)) is the RRM 4 domain.

As to quaternary structure, interacts with THBS4 (via the acidic amphipathic C-terminus).

Its function is as follows. RNA-binding protein that mediates pre-mRNA alternative splicing regulation. Plays a role in the regulation of cell proliferation, differentiation and migration. Positive regulator of EPO-dependent erythropoiesis. Participates in cell differentiation regulation by repressing tissue-specific exons. Promotes Fas exon 6 skipping. Binds RNA, preferentially to both poly(G) and poly(U). The sequence is that of Polypyrimidine tract-binding protein 3 (Ptbp3) from Mus musculus (Mouse).